The chain runs to 519 residues: ATP synthase subunit beta, mitochondrial (519 aa).

Gly-195–Thr-202 lines the ATP pocket.

Belongs to the ATPase alpha/beta chains family. In terms of assembly, F-type ATPases have 2 components, CF(1) - the catalytic core - and CF(0) - the membrane proton channel. CF(1) has five subunits: alpha(3), beta(3), gamma(1), delta(1), epsilon(1). CF(0) has three main subunits: a, b and c.

Its subcellular location is the mitochondrion. It is found in the mitochondrion inner membrane. The enzyme catalyses ATP + H2O + 4 H(+)(in) = ADP + phosphate + 5 H(+)(out). Mitochondrial membrane ATP synthase (F(1)F(0) ATP synthase or Complex V) produces ATP from ADP in the presence of a proton gradient across the membrane which is generated by electron transport complexes of the respiratory chain. F-type ATPases consist of two structural domains, F(1) - containing the extramembraneous catalytic core, and F(0) - containing the membrane proton channel, linked together by a central stalk and a peripheral stalk. During catalysis, ATP synthesis in the catalytic domain of F(1) is coupled via a rotary mechanism of the central stalk subunits to proton translocation. Subunits alpha and beta form the catalytic core in F(1). Rotation of the central stalk against the surrounding alpha(3)beta(3) subunits leads to hydrolysis of ATP in three separate catalytic sites on the beta subunits. In Neurospora crassa (strain ATCC 24698 / 74-OR23-1A / CBS 708.71 / DSM 1257 / FGSC 987), this protein is ATP synthase subunit beta, mitochondrial (atp-2).